Here is a 376-residue protein sequence, read N- to C-terminus: N6-methyladenosine RNA methyltransferase MTA1 (376 aa).

Positions Thr-53–Leu-78 are disordered.

This sequence belongs to the MT-A70-like family.

It carries out the reaction an adenosine in mRNA + S-adenosyl-L-methionine = an N(6)-methyladenosine in mRNA + S-adenosyl-L-homocysteine + H(+). Functionally, N6-methyladenosine RNA methyltransferase that plays a crucial role in fungal phenotypic traits, virulence, and stress tolerance. Mediates the methylation of mRNAs to produce N6-methyladenosine (m6A)-containing mRNAs. M6A is a modification present at internal sites of mRNAs and some non-coding RNAs and plays a role in mRNA stability and processing. Required for appressorium turgor pressure and regulates autophagosome formation during appressorium formation stage. Specifically, mediates the stability of ATG8 mRNA in a m6A-dependent manner via modification of the m6A site A982 located in 3'UTR region. This chain is N6-methyladenosine RNA methyltransferase MTA1, found in Pyricularia oryzae (strain 70-15 / ATCC MYA-4617 / FGSC 8958) (Rice blast fungus).